The chain runs to 90 residues: Protein LURE 1.5 (90 aa).

The first 19 residues, 1–19 (MKLPIIFLTLLIFVSSCTS), serve as a signal peptide directing secretion. Intrachain disulfides connect cysteine 58/cysteine 75 and cysteine 61/cysteine 82.

The protein belongs to the DEFL family. In terms of tissue distribution, expressed in the pistil. Detected exclusively in the synergid cells.

It localises to the secreted. Functionally, inactive pollen tube attractants guiding pollen tubes to the ovular micropyle. This Arabidopsis thaliana (Mouse-ear cress) protein is Protein LURE 1.5.